Consider the following 274-residue polypeptide: Penicillin-insensitive murein endopeptidase (274 aa).

The signal sequence occupies residues 1–19 (MKKTAIALLAWFVSSASLA). Intrachain disulfides connect Cys-44-Cys-265, Cys-187-Cys-235, and Cys-216-Cys-223. Zn(2+) contacts are provided by His-110, His-113, Asp-120, Asp-147, His-150, and His-211. The interval 225–274 (DQPLPPPGDGCGAELQSWFEPPKPGTTKPEKKTPPPLPPSCQALLDEHVL) is disordered.

This sequence belongs to the peptidase M74 family. Dimer. The cofactor is Zn(2+).

The protein resides in the periplasm. Functionally, murein endopeptidase that cleaves the D-alanyl-meso-2,6-diamino-pimelyl amide bond that connects peptidoglycan strands. Likely plays a role in the removal of murein from the sacculus. The protein is Penicillin-insensitive murein endopeptidase of Salmonella choleraesuis (strain SC-B67).